Reading from the N-terminus, the 145-residue chain is Cystatin-like 1 (145 aa).

Positions 1–19 are cleaved as a signal peptide; it reads MGIGCWRNPLLLLIALVLS. The region spanning 37–115 is the Cystatin domain; that stretch reads SKKNMNSTLN…KKLRKSLICE (79 aa). N-linked (GlcNAc...) asparagine glycosylation is present at Asn42. Cystine bridges form between Cys91–Cys101 and Cys114–Cys134.

Belongs to the cystatin family.

It is found in the secreted. This Homo sapiens (Human) protein is Cystatin-like 1 (CSTL1).